The chain runs to 212 residues: Ribosomal RNA large subunit methyltransferase E (212 aa).

The S-adenosyl-L-methionine site is built by G57, W59, D77, D93, and D122. The active-site Proton acceptor is the K162.

Belongs to the class I-like SAM-binding methyltransferase superfamily. RNA methyltransferase RlmE family.

Its subcellular location is the cytoplasm. It catalyses the reaction uridine(2552) in 23S rRNA + S-adenosyl-L-methionine = 2'-O-methyluridine(2552) in 23S rRNA + S-adenosyl-L-homocysteine + H(+). In terms of biological role, specifically methylates the uridine in position 2552 of 23S rRNA at the 2'-O position of the ribose in the fully assembled 50S ribosomal subunit. This is Ribosomal RNA large subunit methyltransferase E from Coxiella burnetii (strain RSA 493 / Nine Mile phase I).